A 210-amino-acid chain; its full sequence is Cytochrome c4 (210 aa).

The signal sequence occupies residues 1–20; the sequence is MNKVLVSLLLTLGITGMAHA. Heme c is bound by residues cysteine 34, cysteine 37, histidine 38, methionine 86, cysteine 139, cysteine 142, histidine 143, and methionine 187.

Post-translationally, binds 2 heme c groups covalently per subunit.

Its subcellular location is the periplasm. Functionally, diheme, high potential cytochrome c believed to be an intermediate electron donor to terminal oxidation systems. In Stutzerimonas stutzeri (Pseudomonas stutzeri), this protein is Cytochrome c4 (cc4).